Here is an 865-residue protein sequence, read N- to C-terminus: Alanine--tRNA ligase (865 aa).

Zn(2+) contacts are provided by H554, H558, C656, and H660.

Belongs to the class-II aminoacyl-tRNA synthetase family. Zn(2+) is required as a cofactor.

Its subcellular location is the cytoplasm. The enzyme catalyses tRNA(Ala) + L-alanine + ATP = L-alanyl-tRNA(Ala) + AMP + diphosphate. Catalyzes the attachment of alanine to tRNA(Ala) in a two-step reaction: alanine is first activated by ATP to form Ala-AMP and then transferred to the acceptor end of tRNA(Ala). Also edits incorrectly charged Ser-tRNA(Ala) and Gly-tRNA(Ala) via its editing domain. The chain is Alanine--tRNA ligase from Idiomarina loihiensis (strain ATCC BAA-735 / DSM 15497 / L2-TR).